A 266-amino-acid polypeptide reads, in one-letter code: GTP cyclohydrolase FolE2 (266 aa).

The protein belongs to the GTP cyclohydrolase IV family.

It carries out the reaction GTP + H2O = 7,8-dihydroneopterin 3'-triphosphate + formate + H(+). It functions in the pathway cofactor biosynthesis; 7,8-dihydroneopterin triphosphate biosynthesis; 7,8-dihydroneopterin triphosphate from GTP: step 1/1. Its function is as follows. Converts GTP to 7,8-dihydroneopterin triphosphate. The protein is GTP cyclohydrolase FolE2 of Burkholderia mallei (strain ATCC 23344).